The sequence spans 943 residues: Receptor-like kinase TMK3 (943 aa).

A signal peptide spans 1 to 24 (MSNSHLGTLCFIISLLGLANFSLS). The Extracellular portion of the chain corresponds to 25-482 (QTGLDDSTMQ…ETSKKSSNVK (458 aa)). Asn-41 carries an N-linked (GlcNAc...) asparagine glycan. A disulfide bridge links Cys-54 with Cys-61. LRR repeat units follow at residues 64–88 (SNRV…LQSL), 89–111 (SELV…LSGL), 112–134 (SRLQ…LFSG), 136–160 (SSLQ…VKEA), 162–183 (SLQN…FFGS), 186–210 (LPSL…FAGT), 212–232 (IQSL…LGNM), 233–254 (TSLV…DLSG), 255–279 (LVSL…LVSL), and 281–301 (SLTT…LFGK). N-linked (GlcNAc...) asparagine glycosylation is found at Asn-165 and Asn-170. N-linked (GlcNAc...) asparagine glycans are attached at residues Asn-223 and Asn-231. Residue Asn-286 is glycosylated (N-linked (GlcNAc...) asparagine). 2 disulfide bridges follow: Cys-315/Cys-323 and Cys-353/Cys-361. LRR repeat units follow at residues 363–386 (GGNI…SLAK), 387–410 (LTSL…ELTT), and 411–438 (LSKL…VTLV). An N-linked (GlcNAc...) asparagine glycan is attached at Asn-365. A disordered region spans residues 441–476 (GNANMGKNGPNKTSDAPGASPGSKPSGGSDGSETSK). A glycan (N-linked (GlcNAc...) asparagine) is linked at Asn-451. A compositionally biased stretch (low complexity) spans 454 to 467 (SDAPGASPGSKPSG). The chain crosses the membrane as a helical span at residues 483 to 503 (IIVPVVGGVVGALCLVGLGVC). Topologically, residues 504-943 (LYAKKRKRPA…ADSFTSVDGR (440 aa)) are cytoplasmic. Residues 514 to 534 (RVQSPSSNMVIHPHHSGDNDD) are disordered. The Protein kinase domain occupies 585–866 (FSEENILGRG…AHIVNVLSSL (282 aa)). Residues 591-599 (LGRGGFGTV) and Lys-613 each bind ATP. The Proton acceptor role is filled by Asp-714. The interval 904 to 943 (QTADDSGSSSSAYGSKDNTQTSIPTRPSGFADSFTSVDGR) is disordered. Over residues 906–918 (ADDSGSSSSAYGS) the composition is skewed to low complexity. Residues 919 to 928 (KDNTQTSIPT) show a composition bias toward polar residues.

It belongs to the protein kinase superfamily. Ser/Thr protein kinase family. In terms of tissue distribution, expressed in roots, leaves, stems, siliques and flowers.

It is found in the membrane. The catalysed reaction is L-seryl-[protein] + ATP = O-phospho-L-seryl-[protein] + ADP + H(+). The enzyme catalyses L-threonyl-[protein] + ATP = O-phospho-L-threonyl-[protein] + ADP + H(+). Involved in auxin signal transduction and cell expansion and proliferation regulation. This chain is Receptor-like kinase TMK3, found in Arabidopsis thaliana (Mouse-ear cress).